The chain runs to 989 residues: SWI/SNF-related matrix-associated actin-dependent regulator of chromatin subfamily A containing DEAD/H box 1 homolog (989 aa).

A disordered region spans residues 1 to 288 (MSTTSDFQTG…RRAKRGETKN (288 aa)). Residues 72–105 (DDDDEDYVDETMPSEDEEDFDNNEEDEDDDDYEE) show a composition bias toward acidic residues. The segment covering 109–120 (RKRKAPSKKKLV) has biased composition (basic residues). Basic and acidic residues predominate over residues 124–140 (ENYRREDSETPEPEMKR). Over residues 187-200 (DDESEDDFINDEEI) the composition is skewed to acidic residues. Composition is skewed to basic and acidic residues over residues 201-221 (SEKG…GKDS) and 241-250 (AQKEQKKKAE). The segment covering 251 to 276 (SDEDWEEDEDDMNADGDETPSDDSDI) has biased composition (acidic residues). The span at 277 to 288 (EERRAKRGETKN) shows a compositional bias: basic and acidic residues. In terms of domain architecture, Helicase ATP-binding spans 406–574 (IMMYNKDLNA…ISLMYFVLSK (169 aa)). Position 419–426 (419–426 (DEMGLGKT)) interacts with ATP. The DEGH box signature appears at 525-528 (DEGH). The Helicase C-terminal domain maps to 757–912 (QLDVMLPEIQ…GVKGQLDEDA (156 aa)). The disordered stretch occupies residues 941–989 (RYDDVEDDSGDSKNGIDAEEAAKKEDEAVKEPVEKEQQKEEESQPSTSA). The span at 950–982 (GDSKNGIDAEEAAKKEDEAVKEPVEKEQQKEEE) shows a compositional bias: basic and acidic residues.

This sequence belongs to the SNF2/RAD54 helicase family.

The protein localises to the nucleus. It is found in the chromosome. It catalyses the reaction ATP + H2O = ADP + phosphate + H(+). Functionally, DNA helicase that possesses intrinsic ATP-dependent nucleosome-remodeling activity and is both required for DNA repair and heterochromatin organization. Promotes DNA end resection of double-strand breaks (DSBs) following DNA damage: probably acts by weakening histone DNA interactions in nucleosomes flanking DSBs. The chain is SWI/SNF-related matrix-associated actin-dependent regulator of chromatin subfamily A containing DEAD/H box 1 homolog from Caenorhabditis elegans.